The chain runs to 742 residues: Polyphosphate kinase (742 aa).

Asn-91 lines the ATP pocket. 2 residues coordinate Mg(2+): Arg-431 and Arg-461. Catalysis depends on His-491, which acts as the Phosphohistidine intermediate. 3 residues coordinate ATP: Tyr-524, Arg-624, and His-652. Residues 718 to 742 are disordered; it reads WTASPQEGHSVRDHQESLMERHRSP. Basic and acidic residues predominate over residues 726–742; sequence HSVRDHQESLMERHRSP.

The protein belongs to the polyphosphate kinase 1 (PPK1) family. It depends on Mg(2+) as a cofactor. An intermediate of this reaction is the autophosphorylated ppk in which a phosphate is covalently linked to a histidine residue through a N-P bond.

It carries out the reaction [phosphate](n) + ATP = [phosphate](n+1) + ADP. In terms of biological role, catalyzes the reversible transfer of the terminal phosphate of ATP to form a long-chain polyphosphate (polyP). This is Polyphosphate kinase from Mycobacterium bovis (strain ATCC BAA-935 / AF2122/97).